The following is a 218-amino-acid chain: Large ribosomal subunit protein uL3 (218 aa).

The interval 134 to 154 (GRASHGNSRSHNVPGSIGMAQ) is disordered. Position 154 is an N5-methylglutamine (Gln-154).

This sequence belongs to the universal ribosomal protein uL3 family. As to quaternary structure, part of the 50S ribosomal subunit. Forms a cluster with proteins L14 and L19. Post-translationally, methylated by PrmB.

Functionally, one of the primary rRNA binding proteins, it binds directly near the 3'-end of the 23S rRNA, where it nucleates assembly of the 50S subunit. The polypeptide is Large ribosomal subunit protein uL3 (Polynucleobacter necessarius subsp. necessarius (strain STIR1)).